The following is a 190-amino-acid chain: MGAAGNTGSSGDSRELMSAADVGRTISRIAHQIIEKTALDGPDGPRVVLLGIPTRGVTLADRLARNIGEYSGVEVGHGALDITLYRDDLMQKPPRPLEATSIPAGGIDDALVILVDDVLYSGRSVRSALDALRDVGRPRVVQLAVLVDRGHRELPLRADYVGKNVPTSRSESVHVLLAEHDGADGVVISR.

The PRPP-binding signature appears at 112–124; the sequence is VILVDDVLYSGRS.

Belongs to the purine/pyrimidine phosphoribosyltransferase family. PyrR subfamily.

It catalyses the reaction UMP + diphosphate = 5-phospho-alpha-D-ribose 1-diphosphate + uracil. Functionally, regulates the transcription of the pyrimidine nucleotide (pyr) operon in response to exogenous pyrimidines. In terms of biological role, also displays a weak uracil phosphoribosyltransferase activity which is not physiologically significant. The sequence is that of Bifunctional protein PyrR from Mycolicibacterium paratuberculosis (strain ATCC BAA-968 / K-10) (Mycobacterium paratuberculosis).